A 555-amino-acid chain; its full sequence is Glypican-6 (555 aa).

The N-terminal stretch at 1–23 (MPSWIGAVILPLLGLLLSLPAGA) is a signal peptide. The span at 348–357 (PALRSARSAP) shows a compositional bias: low complexity. 2 disordered regions span residues 348–376 (PALR…PTTA) and 480–501 (GNDV…GSGC). Ser529 is lipidated: GPI-anchor amidated serine. Positions 530–555 (SAAQRGHSLLSWSLTCIVLALQRLCR) are cleaved as a propeptide — removed in mature form.

It belongs to the glypican family. As to expression, widely expressed. High expression in fetal kidney and lung and lower expressions in fetal liver and brain. In adult tissues, very abundant in ovary, high levels also observed in liver, kidney, small intestine and colon. Not detected in peripheral blood leukocytes. Detected in breast cancer cells (at protein level).

Its subcellular location is the cell membrane. The protein localises to the secreted. The protein resides in the extracellular space. In terms of biological role, cell surface proteoglycan that bears heparan sulfate. Putative cell surface coreceptor for growth factors, extracellular matrix proteins, proteases and anti-proteases. Enhances migration and invasion of cancer cells through WNT5A signaling. This Homo sapiens (Human) protein is Glypican-6 (GPC6).